Consider the following 384-residue polypeptide: Oxoeicosanoid receptor 1 (384 aa).

Residues 1 to 21 are disordered; the sequence is MELHNLSSPSPSLSSSVLPPS. Over 1–58 the chain is Extracellular; that stretch reads MELHNLSSPSPSLSSSVLPPSFSPSPSSAPSAFTTVGGSSGGPCHPTSSSLVSAFLAP. Asparagine 5 carries an N-linked (GlcNAc...) asparagine glycan. Over residues 7–21 the composition is skewed to low complexity; that stretch reads SSPSPSLSSSVLPPS. A helical membrane pass occupies residues 59 to 79; the sequence is ILALEFVLGLVGNSLALFIFC. The Cytoplasmic segment spans residues 80–87; sequence IHTRPWTS. The helical transmembrane segment at 88-108 threads the bilayer; that stretch reads NTVFLVSLVAADFLLISNLPL. At 109–129 the chain is on the extracellular side; the sequence is RVDYYLLHETWRFGAAACKVN. Cysteine 126 and cysteine 198 are oxidised to a cystine. A helical transmembrane segment spans residues 130–152; sequence LFMLSTNRTASVVFLTAIALNRY. The Cytoplasmic segment spans residues 153-172; sequence LKVVQPHHVLSRASVGAAAR. Residues 173–193 form a helical membrane-spanning segment; the sequence is VAGGLWVGILLLNGHLLLSTF. The Extracellular segment spans residues 194–215; sequence SGPSCLSYRVGTKPSASLRWHQ. Residues 216–236 form a helical membrane-spanning segment; that stretch reads ALYLLEFFLPLALILFAIVSI. Residues 237 to 256 are Cytoplasmic-facing; the sequence is GLTIRNRGLGGQAGPQRAMR. A helical membrane pass occupies residues 257-277; it reads VLAMVVAVYTICFLPSIIFGM. The Extracellular portion of the chain corresponds to 278 to 297; sequence ASMVAFWLSACRSLDLCTQL. A helical transmembrane segment spans residues 298–318; sequence FHGSLAFTYLNSVLDPVLYCF. The Cytoplasmic segment spans residues 319–384; sequence SSPNFLHQSR…SLEKEGSSQG (66 aa).

Belongs to the G-protein coupled receptor 1 family. As to expression, expressed in various tissues except brain. Expression is more intense in liver, kidney, peripheral leukocyte, lung, and spleen than in other tissues. Highly expressed in eosinophils, neutrophils, and lung macrophages.

Its subcellular location is the membrane. Functionally, receptor for eicosanoids and polyunsaturated fatty acids such as 5-oxo-6E,8Z,11Z,14Z-eicosatetraenoic acid (5-OXO-ETE), 5(S)-hydroperoxy-6E,8Z,11Z,14Z-eicosatetraenoic acid (5(S)-HPETE) and arachidonic acid. Seems to be coupled to the G(i)/G(o), families of heteromeric G proteins. This is Oxoeicosanoid receptor 1 (OXER1) from Homo sapiens (Human).